Here is a 336-residue protein sequence, read N- to C-terminus: Alpha-N-acetylgalactosaminide alpha-2,6-sialyltransferase 5 (336 aa).

Over 1–8 the chain is Cytoplasmic; it reads MKTLMRHG. The helical; Signal-anchor for type II membrane protein transmembrane segment at 9–29 threads the bilayer; it reads LAVCLALTTMCTSLLLVYSSL. The Lumenal portion of the chain corresponds to 30–336; it reads GGQKERPPQQ…INHPENKPVF (307 aa). The interval 32–81 is disordered; sequence QKERPPQQQQQQQQQQQQASATGSSQPAAESSTQQRPGVPAGPRPLDGYL. The segment covering 38-49 has biased composition (low complexity); the sequence is QQQQQQQQQQQQ. Residues 50 to 67 show a composition bias toward polar residues; it reads ASATGSSQPAAESSTQQR. The cysteines at positions 96 and 245 are disulfide-linked. Asn-137 and Asn-161 each carry an N-linked (GlcNAc...) asparagine glycan.

The protein belongs to the glycosyltransferase 29 family.

It is found in the golgi apparatus membrane. The enzyme catalyses a ganglioside GM1b (d18:1(4E)) + CMP-N-acetyl-beta-neuraminate = a ganglioside GD1alpha (d18:1(4E)) + CMP + H(+). It catalyses the reaction N-acetyl-alpha-neuraminosyl-(2-&gt;3)-beta-D-galactosyl-(1-&gt;3)-N-acetyl-beta-D-glucosaminyl-(1-&gt;3)-beta-D-galactosyl-(1-&gt;4)-beta-D-glucosyl-(1&lt;-&gt;1')-N-acyl-sphing-4-enine + CMP-N-acetyl-beta-neuraminate = N-acetyl-alpha-neuraminosyl-(2-&gt;3)-beta-D-galactosyl-(1-&gt;3)-[N-acetyl-alpha-neuraminosyl-(2-&gt;6)]-N-acetyl-beta-D-glucosaminyl-(1-&gt;3)-beta-D-galactosyl-(1-&gt;4)-beta-D-glucosyl-(1&lt;-&gt;1')-N-acyl-sphing-4-enine + CMP + H(+). The protein operates within glycolipid biosynthesis. Predominantly catalyzes the biosynthesis of ganglioside GD1alpha from GM1b in the brain, by transferring the sialyl group (N-acetyl-alpha-neuraminyl or NeuAc) from CMP-NeuAc to the GalNAc residue on the NeuAc-alpha-2,3-Gal-beta-1,3-GalNAc sequence of GM1b. GD1alpha is a critical molecule in the communication and interaction between neuronal cells and their supportive cells, particularly in brain tissues, and functions as an adhesion molecule in the process of metastasis. Also shows activity towards sialyl Lc4Cer (N-acetyl-alpha-neuraminosyl-(2-&gt;3)-beta-D-galactosyl-(1-&gt;3)-N-acetyl-beta-D-glucosaminyl-(1-&gt;3)-beta-D-galactosyl-(1-&gt;4)-beta-D-glucosyl-(1&lt;-&gt;1')-N-acyl-sphing-4-enine) generating disialyl Lc4Cer, which can lead to the synthesis of disialyl Lewis a (Le(a)), suggested to be a cancer-associated antigen. The chain is Alpha-N-acetylgalactosaminide alpha-2,6-sialyltransferase 5 (ST6GALNAC5) from Homo sapiens (Human).